The following is a 158-amino-acid chain: SsrA-binding protein (158 aa).

The protein belongs to the SmpB family.

The protein resides in the cytoplasm. Its function is as follows. Required for rescue of stalled ribosomes mediated by trans-translation. Binds to transfer-messenger RNA (tmRNA), required for stable association of tmRNA with ribosomes. tmRNA and SmpB together mimic tRNA shape, replacing the anticodon stem-loop with SmpB. tmRNA is encoded by the ssrA gene; the 2 termini fold to resemble tRNA(Ala) and it encodes a 'tag peptide', a short internal open reading frame. During trans-translation Ala-aminoacylated tmRNA acts like a tRNA, entering the A-site of stalled ribosomes, displacing the stalled mRNA. The ribosome then switches to translate the ORF on the tmRNA; the nascent peptide is terminated with the 'tag peptide' encoded by the tmRNA and targeted for degradation. The ribosome is freed to recommence translation, which seems to be the essential function of trans-translation. This is SsrA-binding protein from Bifidobacterium longum (strain DJO10A).